Consider the following 196-residue polypeptide: uncharacterized protein (196 aa).

S-adenosyl-L-methionine is bound by residues 44–46, Gly-80, Val-100, and 107–109; these read TTA and PSL.

It belongs to the class IV-like SAM-binding methyltransferase superfamily. RNA methyltransferase TrmH family.

This is an uncharacterized protein from Serratia marcescens.